A 119-amino-acid polypeptide reads, in one-letter code: Protein GSKIP homolog (119 aa).

It belongs to the GSKIP family.

The chain is Protein GSKIP homolog from Drosophila melanogaster (Fruit fly).